A 266-amino-acid chain; its full sequence is Luciferase (266 aa).

The chain crosses the membrane as a helical span at residues 22 to 41 (GLAAACCALAVASTIAFPYI).

It belongs to the fungal luciferase family.

Its subcellular location is the membrane. The catalysed reaction is 3-hydroxyhispidin + O2 = (E)-caffeoylpyruvate + hnu + CO2. It carries out the reaction 3-hydroxyhispidin + O2 = 4-[(E)-2-(3,4-dihydroxyphenyl)ethenyl]-1,7-dihydroxy-2,3,5-trioxabicyclo[2.2.2]oct-7-en-6-one. Functionally, luciferase; part of the gene cluster that mediates the fungal bioluminescence cycle. Uses the fungal luciferin 3-hydroxyhispidin as a substrate to produce an endoperoxide as a high-energy intermediate with decomposition that yields oxyluciferin (also known as caffeoylpyruvate) and light emission. The fungal bioluminescence cycle begins with the hispidin synthetase that catalyzes the formation of hispidin which is further hydroxylated by the hispidin-3-hydroxylase, yielding the fungal luciferin 3-hydroxyhispidin. The luciferase then produces an endoperoxide as a high-energy intermediate with decomposition that yields oxyluciferin and light emission. Oxyluciferin can be recycled to caffeic acid by caffeoylpyruvate hydrolase. In Armillaria gallica (Bulbous honey fungus), this protein is Luciferase.